A 113-amino-acid chain; its full sequence is Insulin-like peptide 02 (113 aa).

The signal sequence occupies residues 1-22 (MFYLTFLLFGAICIGQIQLGQP). A propeptide spanning residues 23–42 (VKFKVNEDGHRPSVYPIKYR) is cleaved from the precursor. Disulfide bonds link C44–C99, C56–C112, and C98–C103. The propeptide at 62-87 (RRKRSIEADIITDKDTANSYFNRVKR) is c peptide.

The protein belongs to the insulin family.

The protein localises to the secreted. Functionally, insulin decreases blood glucose concentration. May have evolved to activate insulin receptors (INSR) in vertebrates. Molecular docking studies reveals unique interaction with the human insulin receptor. In vivo, insulin-like peptide injection reduces blood glucose levels in two models of zebrafish diabetes (streptozotocin- and glucose-induced). Also shorter swimming distance of zebrafish larvae, an effect which is not observed with human insulin. The sequence is that of Insulin-like peptide 02 from Exaiptasia diaphana (Tropical sea anemone).